The sequence spans 301 residues: uncharacterized protein (301 aa).

The Extracellular portion of the chain corresponds to 1–5 (MSYKK). Residues 6-26 (FVYFINLFFLLGATLLTFFLI) traverse the membrane as a helical segment. At 27 to 112 (LAGGRTTGVL…NRNAYYYLSR (86 aa)) the chain is on the cytoplasmic side. Residues 113 to 133 (VGWAMLLIGLFFLLITLVSVI) traverse the membrane as a helical segment. The Extracellular portion of the chain corresponds to 134–143 (ASLIRYNRRT). Residues 144 to 164 (AALATAMSWITLFFITLSACL) traverse the membrane as a helical segment. Residues 165–191 (YTGCYAKAVKAFHHENRDARLGPKNFG) are Cytoplasmic-facing. The helical transmembrane segment at 192–212 (LIWTTVFLLIVNAICCTIMVA) threads the bilayer. Over 213-301 (THKRNEYIYD…YTEQNVPVVS (89 aa)) the chain is Extracellular. A disordered region spans residues 254–301 (VQQSQSHQNHRFFKKLRTKKRTVTSAGDEPDRVQEERVYTEQNVPVVS). Residues 261–275 (QNHRFFKKLRTKKRT) show a composition bias toward basic residues. Positions 282–292 (EPDRVQEERVY) are enriched in basic and acidic residues.

Belongs to the SUR7 family.

The protein localises to the cell membrane. Involved in sporulation and affects the sphingolipid composition of the plasma membrane. This is an uncharacterized protein from Saccharomyces cerevisiae (strain ATCC 204508 / S288c) (Baker's yeast).